A 544-amino-acid chain; its full sequence is Nucleosome assembly protein 1-like 3 (544 aa).

Disordered regions lie at residues 1-109 (MAEA…LFLD) and 168-345 (PTEE…KKED). Positions 35 to 83 (SNSSSSTNSCSSSGSSSSGSSSSSSSSSSSSSSSSSSSSGSSGSSSNGS) are enriched in low complexity. Residues 168-192 (PTEEECEWNSEEEFSGDEEMQDDTP) show a composition bias toward acidic residues. Basic and acidic residues-rich tracts occupy residues 207–228 (CNEK…PEAK), 235–277 (PKET…KADS), and 314–332 (PARE…EGVN).

This sequence belongs to the nucleosome assembly protein (NAP) family. As to expression, expressed in brain.

It is found in the nucleus. The protein localises to the cytoplasm. This Mus musculus (Mouse) protein is Nucleosome assembly protein 1-like 3 (Nap1l3).